Consider the following 101-residue polypeptide: Large ribosomal subunit protein eL43 (101 aa).

The C4-type zinc-finger motif lies at 40–62; the sequence is CPSCRSLVRLQRIAFGIWKCPKC.

It belongs to the eukaryotic ribosomal protein eL43 family. Requires Zn(2+) as cofactor.

This Pyrobaculum neutrophilum (strain DSM 2338 / JCM 9278 / NBRC 100436 / V24Sta) (Thermoproteus neutrophilus) protein is Large ribosomal subunit protein eL43.